Consider the following 1188-residue polypeptide: Spermatogenesis-associated protein 31C1 (1188 aa).

A helical membrane pass occupies residues 23–43 (PWVLDIFLTLVFALGLFFLLL). Disordered stretches follow at residues 57-92 (PSPRKRKRHLVSQRHLVSQCPTGRRGRPRGRMKNHS), 121-249 (LEKG…LLTP), 483-510 (PGTSQAKGKPRPWQSSTSTGESSKEAQT), 530-567 (TPQNLSRGMESFPGKVLGATSEESERNLRKPLRSDSGS), 733-813 (MPER…PTVP), 934-1013 (NMGH…PSIS), 1121-1143 (QQATLKNQSRPNRDRQIRDQQPL), and 1155-1188 (LRHPQLLLPKKAVSPVSPPQHRPKTPSASSHHHH). Basic residues-rich tracts occupy residues 59–68 (PRKRKRHLVS) and 80–92 (RRGRPRGRMKNHS). Positions 138-154 (VGKRTPDGASRSSHEPM) are enriched in basic and acidic residues. A compositionally biased stretch (low complexity) spans 191–207 (SSLSASQPPEPSLLLER). A compositionally biased stretch (pro residues) spans 210-241 (PEPPALFPHPPHTPDPLACSPPPPKGFTPPPL). Residues 495 to 510 (WQSSTSTGESSKEAQT) show a composition bias toward polar residues. Composition is skewed to polar residues over residues 783–800 (LKGSTQQSRSLGAQSSRA) and 943–954 (PNCQGSCKSQSP). The span at 960 to 976 (HKRENSRKPNLEKHEEM) shows a compositional bias: basic and acidic residues. Residues 1121–1130 (QQATLKNQSR) are compositionally biased toward polar residues.

This sequence belongs to the SPATA31 family.

Its subcellular location is the membrane. Its function is as follows. May play a role in spermatogenesis. This Homo sapiens (Human) protein is Spermatogenesis-associated protein 31C1 (SPATA31C1).